Consider the following 532-residue polypeptide: Pre-rRNA-processing protein pro-1 (532 aa).

WD repeat units follow at residues 136 to 175 and 287 to 326; these read AHYQNITKLALSDDDSMVFTASKDGAIHGYLVTELVSADR and GHSDEITRLTINTDGTLLASGDASGKYCIWEISSHQCLKV. The interval 435 to 464 is disordered; it reads TLGDDEDDAPEVGNQRRQNKKNNKKNRKLQ. Residues 445 to 526 adopt a coiled-coil conformation; the sequence is EVGNQRRQNK…INRQMYEFVA (82 aa). Residues 451 to 464 show a composition bias toward basic residues; that stretch reads RQNKKNNKKNRKLQ.

Belongs to the WD repeat IPI3/WDR18 family. Component of the PELP1 complex, composed of at least PELP1, TEX10 and WDR18. The complex interacts with pre-60S ribosome particles.

The protein resides in the nucleus. The protein localises to the nucleolus. It localises to the nucleoplasm. In terms of biological role, component of the PELP1 complex involved in the nucleolar steps of 28S rRNA maturation and the subsequent nucleoplasmic transit of the pre-60S ribosomal subunit. Required for processing ITS2 sequences from rRNA intermediates during 26S rRNA maturation. Required in the soma to promote normal proliferation and prevent germline tumor formation. This Caenorhabditis briggsae protein is Pre-rRNA-processing protein pro-1 (pro-1).